The chain runs to 635 residues: Iron transport multicopper oxidase FET3 (635 aa).

A signal peptide spans 1–17 (MMVPLLLSTYFITAVYG). Topologically, residues 18 to 559 (ATHTFHWTTG…KSIPTGFTKK (542 aa)) are extracellular. 2 consecutive Plastocyanin-like domains span residues 42–140 (ITCN…FVIE) and 190–292 (NLIL…LQLN). Asn70 and Asn73 each carry an N-linked (GlcNAc...) asparagine glycan. The Cu cation site is built by His77 and His79. A glycan (N-linked (GlcNAc...) asparagine) is linked at Asn109. Residues His122 and His124 each coordinate Cu cation. N-linked (GlcNAc...) asparagine glycans are attached at residues Asn194, Asn198, Asn244, Asn265, Asn292, and Asn359. Residues 382–501 (NPFIYGTNTN…QGLAVVMVED (120 aa)) form the Plastocyanin-like 3 domain. Cu cation-binding residues include His413, His416, and His418. Residue Asn443 is glycosylated (N-linked (GlcNAc...) asparagine). His483, Cys484, His485, and His489 together coordinate Cu cation. Residue Asn535 is glycosylated (N-linked (GlcNAc...) asparagine). Residues 560–580 (GIIAMTFSCLAGVLGITMIAI) traverse the membrane as a helical segment. The Cytoplasmic portion of the chain corresponds to 581–628 (YGFSEIPEPEIKVMRNLHLNPEDVLEKTSSSSVISASNSSSLEDSRNQ).

Belongs to the multicopper oxidase family. The cofactor is Cu cation.

The protein localises to the cell membrane. Iron transport multicopper ferroxidase required for Fe(2+) high affinity uptake. Required to oxidize Fe(2+) and release it from the transporter. Essential component of copper-dependent iron transport. This is Iron transport multicopper oxidase FET3 (FET3) from Candida glabrata (strain ATCC 2001 / BCRC 20586 / JCM 3761 / NBRC 0622 / NRRL Y-65 / CBS 138) (Yeast).